Reading from the N-terminus, the 176-residue chain is NAD(P)H-quinone oxidoreductase subunit I, chloroplastic (176 aa).

4Fe-4S ferredoxin-type domains lie at 55-84 (GRIH…VDWE) and 95-124 (LNYS…MTEE). [4Fe-4S] cluster contacts are provided by cysteine 64, cysteine 67, cysteine 70, cysteine 74, cysteine 104, cysteine 107, cysteine 110, and cysteine 114.

This sequence belongs to the complex I 23 kDa subunit family. NDH is composed of at least 16 different subunits, 5 of which are encoded in the nucleus. [4Fe-4S] cluster is required as a cofactor.

The protein resides in the plastid. Its subcellular location is the chloroplast thylakoid membrane. It catalyses the reaction a plastoquinone + NADH + (n+1) H(+)(in) = a plastoquinol + NAD(+) + n H(+)(out). The catalysed reaction is a plastoquinone + NADPH + (n+1) H(+)(in) = a plastoquinol + NADP(+) + n H(+)(out). NDH shuttles electrons from NAD(P)H:plastoquinone, via FMN and iron-sulfur (Fe-S) centers, to quinones in the photosynthetic chain and possibly in a chloroplast respiratory chain. The immediate electron acceptor for the enzyme in this species is believed to be plastoquinone. Couples the redox reaction to proton translocation, and thus conserves the redox energy in a proton gradient. This Populus trichocarpa (Western balsam poplar) protein is NAD(P)H-quinone oxidoreductase subunit I, chloroplastic.